A 164-amino-acid chain; its full sequence is Endoribonuclease YbeY (164 aa).

3 residues coordinate Zn(2+): histidine 120, histidine 124, and histidine 130.

The protein belongs to the endoribonuclease YbeY family. Zn(2+) serves as cofactor.

It is found in the cytoplasm. Its function is as follows. Single strand-specific metallo-endoribonuclease involved in late-stage 70S ribosome quality control and in maturation of the 3' terminus of the 16S rRNA. This chain is Endoribonuclease YbeY, found in Acidothermus cellulolyticus (strain ATCC 43068 / DSM 8971 / 11B).